A 427-amino-acid chain; its full sequence is GTPase Obg (427 aa).

The Obg domain occupies 1–158 (MFVDQVKIYV…RDVTLELKVL (158 aa)). An OBG-type G domain is found at 159–329 (ADVGLVGFPS…LLFEVANLLE (171 aa)). Residues 165 to 172 (GFPSVGKS), 190 to 194 (FTTIV), 212 to 215 (DLPG), 282 to 285 (NKMD), and 310 to 312 (SAV) each bind GTP. 2 residues coordinate Mg(2+): S172 and T192. The OCT domain maps to 349–427 (YKFESESNFE…ILEYQFEFID (79 aa)).

This sequence belongs to the TRAFAC class OBG-HflX-like GTPase superfamily. OBG GTPase family. Monomer. It depends on Mg(2+) as a cofactor.

It localises to the cytoplasm. In terms of biological role, an essential GTPase which binds GTP, GDP and possibly (p)ppGpp with moderate affinity, with high nucleotide exchange rates and a fairly low GTP hydrolysis rate. Plays a role in control of the cell cycle, stress response, ribosome biogenesis and in those bacteria that undergo differentiation, in morphogenesis control. In Bacillus mycoides (strain KBAB4) (Bacillus weihenstephanensis), this protein is GTPase Obg.